The following is an 852-amino-acid chain: Replication factor C small subunit (852 aa).

The DOD-type homing endonuclease domain maps to 183 to 306 (WLGYFMGSGY…IAYALASFGI (124 aa)).

It belongs to the activator 1 small subunits family. RfcS subfamily. Heteromultimer composed of three to four small subunits (RfcS) and one to two large subunits (RfcL). In terms of processing, this protein undergoes a protein self splicing that involves a post-translational excision of the intervening region (intein) followed by peptide ligation.

In terms of biological role, part of the RFC clamp loader complex which loads the PCNA sliding clamp onto DNA. The complex possesses DNA-dependent ATPase activity which is further stimulated by PCNA. The sequence is that of Replication factor C small subunit (rfcS) from Pyrococcus furiosus (strain ATCC 43587 / DSM 3638 / JCM 8422 / Vc1).